We begin with the raw amino-acid sequence, 161 residues long: Calmodulin-like protein (161 aa).

EF-hand domains lie at 21–56 (EEIDEFREAFMMFDKDGNGTISTKELGIAMRSLGQN), 57–92 (PTEQEILEMINEVDIDGNGQIEFPEFCVMMKRMMKE), 93–128 (TDSEMIREAFRVFDKDGNGVITAQEFRYFMVHMGMQ), and 129–161 (FSEEEVDEMIKEVDVDGDGEIDYEEFVKMMSNQ). 19 residues coordinate Ca(2+): aspartate 34, aspartate 36, asparagine 38, threonine 40, glutamate 45, aspartate 70, aspartate 72, asparagine 74, glutamine 76, glutamate 81, aspartate 106, aspartate 108, asparagine 110, glutamate 117, aspartate 142, aspartate 144, aspartate 146, glutamate 148, and glutamate 153.

It belongs to the calmodulin family.

Its function is as follows. This protein resembles calmodulin in sequence but possibly resembles troponin C in function. The chain is Calmodulin-like protein (cal-1) from Caenorhabditis elegans.